We begin with the raw amino-acid sequence, 176 residues long: ADP-ribosylation factor-like protein 8d (176 aa).

GTP is bound by residues 21 to 26 (NSGKTS), 40 to 43 (MIPT), 62 to 66 (DLGGQ), and 121 to 124 (NKID).

It belongs to the small GTPase superfamily. Arf family. In terms of assembly, interacts with tubulin.

Its subcellular location is the late endosome membrane. The protein resides in the lysosome membrane. It localises to the cytoplasm. The protein localises to the cytoskeleton. It is found in the spindle. Its function is as follows. May play a role in lysosome motility. May play a role in chromosome segregation. The polypeptide is ADP-ribosylation factor-like protein 8d (Arabidopsis thaliana (Mouse-ear cress)).